Here is a 376-residue protein sequence, read N- to C-terminus: MAKRDFYEVLGVERGASEAELKKAYRRLAMKHHPDRNPGDKAAEEAFKEANEAYEVLSDPSKRAAYDQYGHAGVDPQMGAGAGGAGYGGANFSDIFGDVFSDFFSGGRGGSRGGAQRGSDLRYTLELDLEEAVRGTTVTIRVPTLVECKTCDGSGAKKGTSPVTCTTCGGIGQVRMQQGFFSVQQTCPRCHGSGKMISDPCGSCHGQGRVEEQKTLSVKVPPGVDTGDRIRLSGEGEAGTQGGPAGDLYVVVNVREHAIFQRDGKHLYCEVPISFADAALGGELEVPTLDGRVKLKIPEGTQTGKQFRLRGKGVAPVRGGAAGDLMCRVVVETPVNLSKRQREMLEEFRGTLQGDTSHSPKASGWFEGVKRFFGDV.

The J domain maps to 5–70 (DFYEVLGVER…SKRAAYDQYG (66 aa)). A CR-type zinc finger spans residues 135 to 213 (GTTVTIRVPT…CHGQGRVEEQ (79 aa)). C148, C151, C165, C168, C187, C190, C201, and C204 together coordinate Zn(2+). CXXCXGXG motif repeat units lie at residues 148–155 (CKTCDGSG), 165–172 (CTTCGGIG), 187–194 (CPRCHGSG), and 201–208 (CGSCHGQG).

This sequence belongs to the DnaJ family. In terms of assembly, homodimer. Zn(2+) is required as a cofactor.

The protein localises to the cytoplasm. Its function is as follows. Participates actively in the response to hyperosmotic and heat shock by preventing the aggregation of stress-denatured proteins and by disaggregating proteins, also in an autonomous, DnaK-independent fashion. Unfolded proteins bind initially to DnaJ; upon interaction with the DnaJ-bound protein, DnaK hydrolyzes its bound ATP, resulting in the formation of a stable complex. GrpE releases ADP from DnaK; ATP binding to DnaK triggers the release of the substrate protein, thus completing the reaction cycle. Several rounds of ATP-dependent interactions between DnaJ, DnaK and GrpE are required for fully efficient folding. Also involved, together with DnaK and GrpE, in the DNA replication of plasmids through activation of initiation proteins. This is Chaperone protein DnaJ from Stutzerimonas stutzeri (Pseudomonas stutzeri).